The primary structure comprises 607 residues: Matrix metalloproteinase-16 (607 aa).

The first 31 residues, 1–31, serve as a signal peptide directing secretion; sequence MILLAFSSGRRLDFVHRSGVFFFQTLLWILC. The propeptide occupies 32 to 119; it reads ATVCGTEQYF…SSKFNIRRKR (88 aa). The N-linked (GlcNAc...) asparagine glycan is linked to asparagine 83. The short motif at 99–106 is the Cysteine switch element; it reads PRCGVPDQ. Position 101 (cysteine 101) interacts with Zn(2+). The Extracellular portion of the chain corresponds to 120-564; it reads YALTGQKWQH…LDNTASTVKA (445 aa). Position 183 (aspartate 183) interacts with Ca(2+). Zn(2+) is bound by residues histidine 193 and aspartate 195. Positions 200, 201, 203, and 205 each coordinate Ca(2+). Histidine 208 is a Zn(2+) binding site. The Ca(2+) site is built by glycine 215, glycine 217, and aspartate 219. Histidine 221 contacts Zn(2+). Residues aspartate 223 and glutamate 226 each contribute to the Ca(2+) site. Histidine 246 provides a ligand contact to Zn(2+). The active site involves glutamate 247. 2 residues coordinate Zn(2+): histidine 250 and histidine 256. Positions 281–340 are disordered; the sequence is DDLQGIQKIYGPPDKIPPPTRPLPTVPPHRSVPPADPRKNDRPKPPRPPTGRPSYPGAKP. Residues 294-315 show a composition bias toward pro residues; sequence DKIPPPTRPLPTVPPHRSVPPA. Hemopexin repeat units follow at residues 340 to 388, 389 to 434, 436 to 484, and 485 to 532; these read PNIC…WRGL, PPSI…GNGI, PHGI…KGIP, and ESPQ…FMGC. A disulfide bridge connects residues cysteine 343 and cysteine 532. Residues 565 to 585 form a helical membrane-spanning segment; that stretch reads IAIVIPCILALCLLVLVYTVF. The Cytoplasmic segment spans residues 586–607; the sequence is QFKRKGTPRHILYCKRSMQEWV.

It belongs to the peptidase M10A family. In terms of assembly, interacts with CSPG4 through CSPG4 chondroitin sulfate glycosaminoglycan. Zn(2+) is required as a cofactor. Requires Ca(2+) as cofactor. In terms of processing, the precursor is cleaved by a furin endopeptidase. As to expression, strongly expressed in the lung, brain and smooth muscle cells. Weakly detectable in the spleen and liver and indetectable in the heart, skeletal muscle and kidney.

It is found in the cell membrane. It localises to the secreted. The protein resides in the extracellular space. The protein localises to the extracellular matrix. Its function is as follows. Endopeptidase that degrades various components of the extracellular matrix, such as collagen type III and fibronectin. Activates progelatinase A. Involved in the matrix remodeling of blood vessels. The short isoform efficiently converts progelatinase A to the intermediate form but not to the mature one. It has no effect on type I, II, IV and V collagen. However, upon interaction with CSPG4, it may be involved in degradation and invasion of type I collagen by melanoma cells. The protein is Matrix metalloproteinase-16 (Mmp16) of Rattus norvegicus (Rat).